Here is a 550-residue protein sequence, read N- to C-terminus: Probable methionine--tRNA ligase, cytoplasmic (550 aa).

A 'HIGH' region motif is present at residues 10–20 (PYVNNQPHLGN). The 'KMSKS' region motif lies at 328–332 (KFSKS). Lys-331 is an ATP binding site.

It belongs to the class-I aminoacyl-tRNA synthetase family.

Its subcellular location is the cytoplasm. The catalysed reaction is tRNA(Met) + L-methionine + ATP = L-methionyl-tRNA(Met) + AMP + diphosphate. The polypeptide is Probable methionine--tRNA ligase, cytoplasmic (Encephalitozoon cuniculi (strain GB-M1) (Microsporidian parasite)).